A 2498-amino-acid polypeptide reads, in one-letter code: Nuclear receptor corepressor 1 (2498 aa).

Disordered regions lie at residues 1 to 38 (MSSS…QQEY), 54 to 84 (IQQQ…SGYD), 134 to 169 (SEVK…SKLS), and 198 to 223 (QQQL…VEQK). 3 stretches are compositionally biased toward basic and acidic residues: residues 71-82 (PVSDRPQDRRSG), 134-148 (SEVK…KHES), and 204-213 (EAAKPPEPEK). The interaction with tbl1xr1-A stretch occupies residues 154–304 (SGQPGDDQDA…REQNICQRYD (151 aa)). Residues 168 to 208 (LSKEELIQSMDRVDREIAKVEQQILKLKKKQQQLEEEAAKP) are a coiled coil. The region spanning 427-478 (QFMNVWTDHEKEIFKEKFVRHPKNFGLIASYLERKNVSDCVLYYYLTKKNEN) is the SANT 1 domain. The segment covering 483–493 (VRRNYPKRRGR) has biased composition (basic residues). Disordered regions lie at residues 483 to 649 (VRRN…GSKS), 668 to 912 (NLLQ…FGSR), 1075 to 1122 (SLSD…GTPG), 1417 to 1436 (DLVS…IMEG), 1470 to 1583 (SWGV…QRES), 1737 to 1851 (PGTQ…AQES), and 1916 to 1990 (PQME…TAHT). 2 stretches are compositionally biased toward basic and acidic residues: residues 502–525 (SQEE…KEDE) and 535–548 (KEEL…KIDA). Residues 502–552 (SQEEKEIEKVEEEKADRNDKKEDERREEEEKEEKEELREGAKDKIDAVAED) adopt a coiled-coil conformation. The span at 582–611 (ASEAAAANAVTTATTAPVTTTSTATTVAPV) shows a compositional bias: low complexity. The span at 612–627 (PVAPPPEEPTPPPPPQ) shows a compositional bias: pro residues. Residues 628-665 (EQSLVDHGRNWGAIAKMVGSKSESQCKNFYFNYKRRHN) enclose the SANT 2 domain. Residues 689-699 (QCDSIASTVSA) are compositionally biased toward polar residues. The segment covering 700–719 (QEDDENEASNEEENPEDSEG) has biased composition (acidic residues). Composition is skewed to low complexity over residues 727–738 (ESAPSPSPAEAA) and 761–774 (DAAS…SPSP). Over residues 854-863 (MERLMDRAEA) the composition is skewed to basic and acidic residues. Composition is skewed to polar residues over residues 872 to 891 (QNIS…SATC) and 1102 to 1122 (ATSS…GTPG). A compositionally biased stretch (basic and acidic residues) spans 1484-1501 (KMGERSKHEDTKSSDAIR). A compositionally biased stretch (polar residues) spans 1505–1516 (TSVVSSGPSVLR). Residues 1545–1558 (PSPMSRSSPMARSA) show a composition bias toward low complexity. A coiled-coil region spans residues 1765-1804 (VSAERERERERERERDREREKEQRERESDRERERDRLAHA). Residues 1767–1802 (AERERERERERERDREREKEQRERESDRERERDRLA) are compositionally biased toward basic and acidic residues. 2 stretches are compositionally biased toward low complexity: residues 1803 to 1813 (HAAAAAAAASA) and 1820 to 1835 (RPVS…RPSS). The span at 1842–1851 (PSPSVRAQES) shows a compositional bias: polar residues. Basic and acidic residues predominate over residues 1921–1942 (AKPKESKNDSARSEENLSRRNA). Positions 1958 to 1980 (SPYTSSSFSSSKSQSQPSSAVYS) are enriched in low complexity. The CORNR box 1 motif lies at 2012–2016 (IDVII). The interval 2022–2109 (SDKDGRERNS…SPPQQTIPGH (88 aa)) is disordered. Low complexity predominate over residues 2031-2040 (SQSSDASSSH). A compositionally biased stretch (basic and acidic residues) spans 2043–2052 (HRYEAPRETI). Positions 2093–2106 (RYRQQQESPPQQTI) are enriched in polar residues. A CORNR box 2 motif is present at residues 2123–2127 (ICHII). Over residues 2136 to 2145 (PVNQPLQQPP) the composition is skewed to low complexity. Positions 2136–2222 (PVNQPLQQPP…PISPPQAPML (87 aa)) are disordered. A compositionally biased stretch (polar residues) spans 2146–2175 (ASTFQSTNPTSTAVRTKASSRFSPESQVQP). The span at 2190–2209 (IPDKPRGRPGKSPDRGHISE) shows a compositional bias: basic and acidic residues. The CORNR box 3 signature appears at 2326–2330 (LEDII). 2 disordered regions span residues 2344 to 2446 (DHGV…YNPL) and 2464 to 2498 (TSMT…DSDE). Positions 2353–2362 (QGNQSGTPNS) are enriched in polar residues. The span at 2380 to 2394 (HKQKLISKYGSRKTK) shows a compositional bias: basic residues. Polar residues-rich tracts occupy residues 2464–2476 (TSMT…QQSR) and 2489–2498 (QYETLSDSDE).

It belongs to the N-CoR nuclear receptor corepressors family. As to quaternary structure, forms a large corepressor complex that contains sin3a/b, histone deacetylases hdac1 and hdac2, rbbp4 and possibly rbbp7. Interacts with the thyroid receptor (TR, composed of rxra and thrb) and the retinoid acid receptor (RAR, composed of rxra and rara) in the absence of ligand. Interacts with tbl1xr1-A and possibly tbl1xr1-B. Interacts with zbtb33/kaiso.

The protein localises to the nucleus. Mediates transcriptional repression by certain nuclear receptors. Participates in complexes which promote histone deacetylation and the formation of repressive chromatin structures which may impede access by the basal transcription machinery. In association with hdac3, may play a role in the regulation of the circadian clock. The sequence is that of Nuclear receptor corepressor 1 (ncor1) from Xenopus laevis (African clawed frog).